The sequence spans 309 residues: Homoserine kinase (309 aa).

An ATP-binding site is contributed by 91 to 101 (PIGSGLGSSAC).

It belongs to the GHMP kinase family. Homoserine kinase subfamily.

It localises to the cytoplasm. The catalysed reaction is L-homoserine + ATP = O-phospho-L-homoserine + ADP + H(+). It participates in amino-acid biosynthesis; L-threonine biosynthesis; L-threonine from L-aspartate: step 4/5. Its function is as follows. Catalyzes the ATP-dependent phosphorylation of L-homoserine to L-homoserine phosphate. This chain is Homoserine kinase, found in Pectobacterium carotovorum subsp. carotovorum (strain PC1).